A 680-amino-acid chain; its full sequence is Trehalase (680 aa).

The interval 1–27 (MVLHAQPPDQSTETAREAKALAGATDG) is disordered.

Belongs to the glycosyl hydrolase 15 family. In terms of assembly, homomultimer. The cofactor is phosphate.

It carries out the reaction alpha,alpha-trehalose + H2O = alpha-D-glucose + beta-D-glucose. The protein operates within glycan degradation; trehalose degradation; D-glucose from alpha,alpha-trehalose: step 1/1. Its function is as follows. Catalyzes the hydrolysis of alpha,alpha-trehalose into two molecules of D-glucose. The sequence is that of Trehalase from Mycobacterium tuberculosis (strain ATCC 25618 / H37Rv).